The chain runs to 332 residues: Tetraacyldisaccharide 4'-kinase (332 aa).

58–65 contacts ATP; that stretch reads TVGGSGKT.

The protein belongs to the LpxK family.

The enzyme catalyses a lipid A disaccharide + ATP = a lipid IVA + ADP + H(+). Its pathway is glycolipid biosynthesis; lipid IV(A) biosynthesis; lipid IV(A) from (3R)-3-hydroxytetradecanoyl-[acyl-carrier-protein] and UDP-N-acetyl-alpha-D-glucosamine: step 6/6. Transfers the gamma-phosphate of ATP to the 4'-position of a tetraacyldisaccharide 1-phosphate intermediate (termed DS-1-P) to form tetraacyldisaccharide 1,4'-bis-phosphate (lipid IVA). In Shewanella piezotolerans (strain WP3 / JCM 13877), this protein is Tetraacyldisaccharide 4'-kinase.